The primary structure comprises 374 residues: Alanine racemase (374 aa).

The active-site Proton acceptor; specific for D-alanine is K40. K40 bears the N6-(pyridoxal phosphate)lysine mark. A substrate-binding site is contributed by R139. The active-site Proton acceptor; specific for L-alanine is the Y261. M309 serves as a coordination point for substrate.

It belongs to the alanine racemase family. It depends on pyridoxal 5'-phosphate as a cofactor.

It carries out the reaction L-alanine = D-alanine. It participates in amino-acid biosynthesis; D-alanine biosynthesis; D-alanine from L-alanine: step 1/1. Catalyzes the interconversion of L-alanine and D-alanine. May also act on other amino acids. In Rhodospirillum rubrum (strain ATCC 11170 / ATH 1.1.1 / DSM 467 / LMG 4362 / NCIMB 8255 / S1), this protein is Alanine racemase (alr).